Consider the following 399-residue polypeptide: Acetate kinase (399 aa).

Residue N7 participates in Mg(2+) binding. ATP is bound at residue K14. Position 91 (R91) interacts with substrate. D148 acts as the Proton donor/acceptor in catalysis. Residues H208–G212, D283–R285, and G331–N335 each bind ATP. Position 385 (E385) interacts with Mg(2+).

Belongs to the acetokinase family. Homodimer. Requires Mg(2+) as cofactor. It depends on Mn(2+) as a cofactor.

It is found in the cytoplasm. It catalyses the reaction acetate + ATP = acetyl phosphate + ADP. The protein operates within metabolic intermediate biosynthesis; acetyl-CoA biosynthesis; acetyl-CoA from acetate: step 1/2. In terms of biological role, catalyzes the formation of acetyl phosphate from acetate and ATP. Can also catalyze the reverse reaction. The protein is Acetate kinase of Bacteroides thetaiotaomicron (strain ATCC 29148 / DSM 2079 / JCM 5827 / CCUG 10774 / NCTC 10582 / VPI-5482 / E50).